Here is a 377-residue protein sequence, read N- to C-terminus: Dual-specificity RNA methyltransferase RlmN (377 aa).

Residue E102 is the Proton acceptor of the active site. The 238-residue stretch at 108 to 345 (EPDRRTLCVS…AVVRKNRGGD (238 aa)) folds into the Radical SAM core domain. A disulfide bridge links C115 with C350. [4Fe-4S] cluster is bound by residues C122, C126, and C129. Residues 177 to 178 (GE), S209, 231 to 233 (SLN), and N307 each bind S-adenosyl-L-methionine. Residue C350 is the S-methylcysteine intermediate of the active site. Positions 354–377 (AAEGGPGDPRRPAPPPLTRLPAAG) are disordered.

This sequence belongs to the radical SAM superfamily. RlmN family. [4Fe-4S] cluster serves as cofactor.

Its subcellular location is the cytoplasm. It carries out the reaction adenosine(2503) in 23S rRNA + 2 reduced [2Fe-2S]-[ferredoxin] + 2 S-adenosyl-L-methionine = 2-methyladenosine(2503) in 23S rRNA + 5'-deoxyadenosine + L-methionine + 2 oxidized [2Fe-2S]-[ferredoxin] + S-adenosyl-L-homocysteine. The enzyme catalyses adenosine(37) in tRNA + 2 reduced [2Fe-2S]-[ferredoxin] + 2 S-adenosyl-L-methionine = 2-methyladenosine(37) in tRNA + 5'-deoxyadenosine + L-methionine + 2 oxidized [2Fe-2S]-[ferredoxin] + S-adenosyl-L-homocysteine. In terms of biological role, specifically methylates position 2 of adenine 2503 in 23S rRNA and position 2 of adenine 37 in tRNAs. m2A2503 modification seems to play a crucial role in the proofreading step occurring at the peptidyl transferase center and thus would serve to optimize ribosomal fidelity. The polypeptide is Dual-specificity RNA methyltransferase RlmN (Anaeromyxobacter sp. (strain Fw109-5)).